Here is a 539-residue protein sequence, read N- to C-terminus: Phosphoenolpyruvate carboxykinase (ATP) (539 aa).

Substrate-binding residues include Arg-64, Tyr-206, and Lys-212. Residues Lys-212, His-231, and 247-255 each bind ATP; that span reads GLSGTGKTT. Mn(2+) contacts are provided by Lys-212 and His-231. Position 268 (Asp-268) interacts with Mn(2+). ATP-binding positions include Glu-296, Arg-332, 448–449, and Thr-454; that span reads RI. Arg-332 is a binding site for substrate.

The protein belongs to the phosphoenolpyruvate carboxykinase (ATP) family. Monomer. The cofactor is Mn(2+).

Its subcellular location is the cytoplasm. It carries out the reaction oxaloacetate + ATP = phosphoenolpyruvate + ADP + CO2. It functions in the pathway carbohydrate biosynthesis; gluconeogenesis. Functionally, involved in the gluconeogenesis. Catalyzes the conversion of oxaloacetate (OAA) to phosphoenolpyruvate (PEP) through direct phosphoryl transfer between the nucleoside triphosphate and OAA. This Citrobacter koseri (strain ATCC BAA-895 / CDC 4225-83 / SGSC4696) protein is Phosphoenolpyruvate carboxykinase (ATP).